A 339-amino-acid polypeptide reads, in one-letter code: MYLIEPIRNGKRITDGAVALAMQVYVQENLFLDDDILFPYYCDPKVEIGKFQNAVVETNQEYLKEHHIPVVRRDTGGGAVYVDSGAVNICYLINDNGVFGDFKRTYQPAIEALHHLGATGVEMSGRNDLVIDGKKVSGAAMTIANGRVYGGYSLLLDVDFEAMEKALKPNRKKIESKGIRSVRSRVGNIREHLAPQYQGITIEEFKDLMICQLLQIETISQAKRYDLTEKDWQQIDALTERKYHNWEWNYGNAPQYRYHRDGRFTGGTVDIHLDIKKGYIAACRIYGDFFGKADIAELEGHLIGTRMEKEDVLATLNAIDLAPYLGAITAEELGDLIFS.

Residues 31 to 221 enclose the BPL/LPL catalytic domain; it reads FLDDDILFPY…QLLQIETISQ (191 aa). Residues Arg73, 78 to 81, Lys135, and Ala139 contribute to the ATP site; that span reads GAVY. Position 135 (Lys135) interacts with (R)-lipoate.

Belongs to the LplA family.

It catalyses the reaction L-lysyl-[lipoyl-carrier protein] + (R)-lipoate + ATP = N(6)-[(R)-lipoyl]-L-lysyl-[lipoyl-carrier protein] + AMP + diphosphate + H(+). The protein operates within protein modification; protein lipoylation via exogenous pathway; protein N(6)-(lipoyl)lysine from lipoate: step 1/2. It functions in the pathway protein modification; protein lipoylation via exogenous pathway; protein N(6)-(lipoyl)lysine from lipoate: step 2/2. Catalyzes specifically the lipoylation of GcvH-L (SpyM50867), likely via the ATP-dependent activation of lipoate to lipoyl-AMP and the transfer of the activated lipoyl onto the lipoyl domain of the target protein. In Streptococcus pyogenes serotype M5 (strain Manfredo), this protein is Lipoate--protein ligase.